The sequence spans 242 residues: MNDVIIRQLAHLIPYQPLWEAMQTFTALRQSQTTDEIWFLEHEPVFTQGLAGKPEHVLNSGNIPLIRTDRGGQVTYHGPGQLMMYLLLDLNRLGLSTRTFVRTIENTVAESLQEWGIPAQGKETAPGVYVDDKKICSIGLRVRKGFSYHGLALNVAMDLTPFSCINPCGFKGLMMTQIQDYVNPIEMDAVKRTIIPLFLKNFGYNQPAIMVETSLEFLIDDHLRSFSEKLGERETVTNSRQN.

Residues 31–206 (SQTTDEIWFL…LFLKNFGYNQ (176 aa)) enclose the BPL/LPL catalytic domain. Substrate is bound by residues 70–77 (RGGQVTYH), 137–139 (SIG), and 150–152 (GLA). The active-site Acyl-thioester intermediate is the Cys168.

This sequence belongs to the LipB family.

It localises to the cytoplasm. The catalysed reaction is octanoyl-[ACP] + L-lysyl-[protein] = N(6)-octanoyl-L-lysyl-[protein] + holo-[ACP] + H(+). It functions in the pathway protein modification; protein lipoylation via endogenous pathway; protein N(6)-(lipoyl)lysine from octanoyl-[acyl-carrier-protein]: step 1/2. Functionally, catalyzes the transfer of endogenously produced octanoic acid from octanoyl-acyl-carrier-protein onto the lipoyl domains of lipoate-dependent enzymes. Lipoyl-ACP can also act as a substrate although octanoyl-ACP is likely to be the physiological substrate. This is Octanoyltransferase from Coxiella burnetii (strain CbuK_Q154) (Coxiella burnetii (strain Q154)).